Reading from the N-terminus, the 595-residue chain is Probable xyloglucan glycosyltransferase 9 (595 aa).

Helical transmembrane passes span 30-50 and 77-97; these read AFVV…INGW and ATYV…LFLI. Asp177 is a catalytic residue. The substrate site is built by Asp236 and Asp238. The active site involves Asp330. Helical transmembrane passes span 408–428, 433–453, 545–564, and 570–590; these read LILP…TMFV, LPDW…ILPS, IYKK…ARSL, and IHFY…LDLI.

Belongs to the glycosyltransferase 2 family. Plant cellulose synthase-like C subfamily.

It localises to the golgi apparatus membrane. Functionally, probable beta-1,4-glucan synthase rather involved in the synthesis of the xyloglucan backbone than cellulose. Seems to work simultaneously with xyloglucan 6-xylosyltransferase. Xyloglucan is a noncellulosic polysaccharides of plant cell wall and consists of a glucan backbone substituted by xylose, galactose and fucose. This is Probable xyloglucan glycosyltransferase 9 (CSLC9) from Oryza sativa subsp. japonica (Rice).